Here is a 225-residue protein sequence, read N- to C-terminus: Enolase-phosphatase E1 (225 aa).

The protein belongs to the HAD-like hydrolase superfamily. MasA/MtnC family. As to quaternary structure, monomer. The cofactor is Mg(2+).

The catalysed reaction is 5-methylsulfanyl-2,3-dioxopentyl phosphate + H2O = 1,2-dihydroxy-5-(methylsulfanyl)pent-1-en-3-one + phosphate. Its pathway is amino-acid biosynthesis; L-methionine biosynthesis via salvage pathway; L-methionine from S-methyl-5-thio-alpha-D-ribose 1-phosphate: step 3/6. It participates in amino-acid biosynthesis; L-methionine biosynthesis via salvage pathway; L-methionine from S-methyl-5-thio-alpha-D-ribose 1-phosphate: step 4/6. Its function is as follows. Bifunctional enzyme that catalyzes the enolization of 2,3-diketo-5-methylthiopentyl-1-phosphate (DK-MTP-1-P) into the intermediate 2-hydroxy-3-keto-5-methylthiopentenyl-1-phosphate (HK-MTPenyl-1-P), which is then dephosphorylated to form the acireductone 1,2-dihydroxy-3-keto-5-methylthiopentene (DHK-MTPene). The polypeptide is Enolase-phosphatase E1 (Pseudomonas aeruginosa (strain LESB58)).